The primary structure comprises 256 residues: Phosphonates import ATP-binding protein PhnC (256 aa).

The ABC transporter domain maps to 2 to 246 (LKVIQLDKTY…VLQHIYRQPD (245 aa)). 35-42 (GPSGAGKT) is an ATP binding site.

It belongs to the ABC transporter superfamily. Phosphonates importer (TC 3.A.1.9.1) family. As to quaternary structure, the complex is composed of two ATP-binding proteins (PhnC), two transmembrane proteins (PhnE) and a solute-binding protein (PhnD).

The protein resides in the cell membrane. The enzyme catalyses phosphonate(out) + ATP + H2O = phosphonate(in) + ADP + phosphate + H(+). Its function is as follows. Part of the ABC transporter complex PhnCDE involved in phosphonates import. Responsible for energy coupling to the transport system. This chain is Phosphonates import ATP-binding protein PhnC, found in Lactiplantibacillus plantarum (strain ATCC BAA-793 / NCIMB 8826 / WCFS1) (Lactobacillus plantarum).